An 89-amino-acid polypeptide reads, in one-letter code: UPF0223 protein BCB4264_A4064 (89 aa).

Belongs to the UPF0223 family.

The polypeptide is UPF0223 protein BCB4264_A4064 (Bacillus cereus (strain B4264)).